A 61-amino-acid chain; its full sequence is Putative neurotoxin-D (61 aa).

Positions 1 to 19 (MRTTVAILLVLFALSAILA) are cleaved as a signal peptide. 3 disulfides stabilise this stretch: Cys31–Cys51, Cys37–Cys56, and Cys39–Cys58.

In terms of tissue distribution, expressed by the venom gland.

The protein resides in the secreted. The sequence is that of Putative neurotoxin-D from Lychas mucronatus (Chinese swimming scorpion).